Reading from the N-terminus, the 424-residue chain is Putative chloroquine resistance transporter (424 aa).

Residues 1 to 56 (MTGMKKGKNKKKNVKNDERYKELDSLISNDSEIGNNSRWGGAKRICKLIGNEMRNN) lie on the Cytoplasmic side of the membrane. The helical transmembrane segment at 57–77 (IYVYLLSILYLCVSVMNKVFS) threads the bilayer. Residues 78 to 88 (KRTLNKIGNYS) lie on the Vacuolar side of the membrane. N-linked (GlcNAc...) asparagine glycosylation occurs at N86. The chain crosses the membrane as a helical span at residues 89 to 109 (FVTSEVHNMICTIVFQLLYFI). The Cytoplasmic portion of the chain corresponds to 110–125 (YRKTSNPASRNESQKN). A helical membrane pass occupies residues 126-146 (FGWQFFLISLLDASTVIITMI). At 147–156 (GLTRTTGNIQ) the chain is on the vacuolar side. Residues 157–177 (SFIMQLIIPVNMYFCFIFLGY) traverse the membrane as a helical segment. Topologically, residues 178-180 (RYH) are cytoplasmic. Residues 181-201 (LFNYLGAFIILITIAAVETVL) traverse the membrane as a helical segment. The Vacuolar segment spans residues 202–209 (SYETQSDN). Residues 210–230 (SIIFNLIMIFALIPLSFSNMT) traverse the membrane as a helical segment. At 231-248 (REVVFKKHKINIIRLNAM) the chain is on the cytoplasmic side. The chain crosses the membrane as a helical span at residues 249 to 269 (VALFQFFTSLLVLPVYNISFL). Residues 270–317 (KEIYMPFSEMGTNINDGLRCLFYGQSTIVENCGVGMVKMCDQCEGAWK) lie on the Vacuolar side of the membrane. 2 disulfides stabilise this stretch: C289–C312 and C301–C309. The helical transmembrane segment at 318-338 (TFITYSFFNICDNLLVCYIID) threads the bilayer. At 339-346 (KFSTMTYT) the chain is on the cytoplasmic side. The helical transmembrane segment at 347-367 (IVSCIQGPAITIAYYFKFLAG) threads the bilayer. The Vacuolar segment spans residues 368-377 (DVVRQPRLLD). The chain crosses the membrane as a helical span at residues 378-398 (FLTLFGYLLGTIIYRIGNIIL). Residues 399 to 424 (EKKKMLKALNTDGSEAELTSIETSTA) lie on the Cytoplasmic side of the membrane.

The protein belongs to the CRT-like transporter family.

The protein localises to the vacuole membrane. Its function is as follows. Nutrient transporter. Involved in maintaining the osmotic homeostasis of the digestive vacuole. This chain is Putative chloroquine resistance transporter, found in Plasmodium chabaudi.